We begin with the raw amino-acid sequence, 732 residues long: Elongation factor 2 (732 aa).

The tr-type G domain maps to 19–228 (ELVRNIGIVA…TKITFKDIVE (210 aa)). GTP is bound by residues 28-35 (AHIDHGKT), 94-98 (DTPGH), and 148-151 (NKID). Diphthamide is present on His598.

It belongs to the TRAFAC class translation factor GTPase superfamily. Classic translation factor GTPase family. EF-G/EF-2 subfamily.

The protein resides in the cytoplasm. Functionally, catalyzes the GTP-dependent ribosomal translocation step during translation elongation. During this step, the ribosome changes from the pre-translocational (PRE) to the post-translocational (POST) state as the newly formed A-site-bound peptidyl-tRNA and P-site-bound deacylated tRNA move to the P and E sites, respectively. Catalyzes the coordinated movement of the two tRNA molecules, the mRNA and conformational changes in the ribosome. The sequence is that of Elongation factor 2 from Thermoplasma volcanium (strain ATCC 51530 / DSM 4299 / JCM 9571 / NBRC 15438 / GSS1).